A 157-amino-acid chain; its full sequence is NADPH-dependent 7-cyano-7-deazaguanine reductase (157 aa).

Cys55 acts as the Thioimide intermediate in catalysis. The active-site Proton donor is Asp62. Residues 77 to 79 and 96 to 97 each bind substrate; these read VES and HE.

It belongs to the GTP cyclohydrolase I family. QueF type 1 subfamily.

Its subcellular location is the cytoplasm. The enzyme catalyses 7-aminomethyl-7-carbaguanine + 2 NADP(+) = 7-cyano-7-deazaguanine + 2 NADPH + 3 H(+). It functions in the pathway tRNA modification; tRNA-queuosine biosynthesis. Catalyzes the NADPH-dependent reduction of 7-cyano-7-deazaguanine (preQ0) to 7-aminomethyl-7-deazaguanine (preQ1). The sequence is that of NADPH-dependent 7-cyano-7-deazaguanine reductase from Neisseria meningitidis serogroup A / serotype 4A (strain DSM 15465 / Z2491).